The sequence spans 136 residues: Small ribosomal subunit protein uS19 (136 aa).

A disordered region spans residues 114-136; sequence RSRVSHGSAGVGATRSSKFVPLK.

The protein belongs to the universal ribosomal protein uS19 family.

Protein S19 forms a complex with S13 that binds strongly to the 16S ribosomal RNA. The protein is Small ribosomal subunit protein uS19 of Methanosarcina acetivorans (strain ATCC 35395 / DSM 2834 / JCM 12185 / C2A).